The primary structure comprises 377 residues: Lactosylceramide 1,3-N-acetyl-beta-D-glucosaminyltransferase (377 aa).

The Cytoplasmic segment spans residues 1 to 12 (MLISARRLRRCQ). Residues 13-30 (FFQLLTSCFVLSLMALLV) form a helical; Signal-anchor for type II membrane protein membrane-spanning segment. Topologically, residues 31–377 (QEDNSLINHV…DTYPCSAAWS (347 aa)) are lumenal. 3 N-linked (GlcNAc...) asparagine glycosylation sites follow: asparagine 56, asparagine 167, and asparagine 275.

It belongs to the glycosyltransferase 31 family.

The protein resides in the golgi apparatus membrane. The enzyme catalyses a beta-D-Gal-(1-&gt;4)-beta-D-Glc-(1&lt;-&gt;1)-Cer(d18:1(4E)) + UDP-N-acetyl-alpha-D-glucosamine = a beta-D-GlcNAc-(1-&gt;3)-beta-D-Gal-(1-&gt;4)-beta-D-Glc-(1&lt;-&gt;1)-Cer(d18:1(4E)) + UDP + H(+). It catalyses the reaction a neolactoside nLc4Cer(d18:1(4E)) + UDP-N-acetyl-alpha-D-glucosamine = a neolactoside IV(3)-beta-GlcNAc-nLc4Cer(d18:1(4E)) + UDP + H(+). Its pathway is protein modification; protein glycosylation. In terms of biological role, beta-1,3-N-acetylglucosaminyltransferase that plays a key role in the synthesis of lacto- or neolacto-series carbohydrate chains on glycolipids. The sequence is that of Lactosylceramide 1,3-N-acetyl-beta-D-glucosaminyltransferase (b3gnt5) from Xenopus tropicalis (Western clawed frog).